A 273-amino-acid polypeptide reads, in one-letter code: Elongation factor Ts (273 aa).

The interval 80 to 83 is involved in Mg(2+) ion dislocation from EF-Tu; it reads TDFV.

This sequence belongs to the EF-Ts family.

The protein localises to the cytoplasm. Functionally, associates with the EF-Tu.GDP complex and induces the exchange of GDP to GTP. It remains bound to the aminoacyl-tRNA.EF-Tu.GTP complex up to the GTP hydrolysis stage on the ribosome. This Tropheryma whipplei (strain Twist) (Whipple's bacillus) protein is Elongation factor Ts.